We begin with the raw amino-acid sequence, 234 residues long: uncharacterized protein (234 aa).

A disordered region spans residues 62-99 (NEESISDLNSDNPGNSEPSDVESFVLSDEDENSEKDFS). Positions 67–79 (SDLNSDNPGNSEP) are enriched in polar residues.

This is an uncharacterized protein from Acanthamoeba polyphaga (Amoeba).